Here is a 421-residue protein sequence, read N- to C-terminus: 4-hydroxy-3-methylbut-2-en-1-yl diphosphate synthase (flavodoxin) (421 aa).

The segment at 1–20 (MHDAVTRPTPPSDATSWPRR) is disordered. The [4Fe-4S] cluster site is built by cysteine 311, cysteine 314, cysteine 357, and glutamate 364.

Belongs to the IspG family. The cofactor is [4Fe-4S] cluster.

The catalysed reaction is (2E)-4-hydroxy-3-methylbut-2-enyl diphosphate + oxidized [flavodoxin] + H2O + 2 H(+) = 2-C-methyl-D-erythritol 2,4-cyclic diphosphate + reduced [flavodoxin]. It participates in isoprenoid biosynthesis; isopentenyl diphosphate biosynthesis via DXP pathway; isopentenyl diphosphate from 1-deoxy-D-xylulose 5-phosphate: step 5/6. Functionally, converts 2C-methyl-D-erythritol 2,4-cyclodiphosphate (ME-2,4cPP) into 1-hydroxy-2-methyl-2-(E)-butenyl 4-diphosphate. The sequence is that of 4-hydroxy-3-methylbut-2-en-1-yl diphosphate synthase (flavodoxin) from Stenotrophomonas maltophilia (strain R551-3).